Consider the following 330-residue polypeptide: DNA repair and recombination protein RadA (330 aa).

124-131 (GEFGSGKT) is an ATP binding site.

Belongs to the eukaryotic RecA-like protein family.

Functionally, involved in DNA repair and in homologous recombination. Binds and assemble on single-stranded DNA to form a nucleoprotein filament. Hydrolyzes ATP in a ssDNA-dependent manner and promotes DNA strand exchange between homologous DNA molecules. The polypeptide is DNA repair and recombination protein RadA (Pyrobaculum neutrophilum (strain DSM 2338 / JCM 9278 / NBRC 100436 / V24Sta) (Thermoproteus neutrophilus)).